The sequence spans 341 residues: Transcription factor VIP1 (341 aa).

Disordered stretches follow at residues 1-33 (MEGG…HRRA), 59-106 (SLDF…PEAR), and 135-156 (SSGE…DGEM). Positions 1–162 (MEGGGRGPNQ…DGEMSSASFN (162 aa)) are necessary and sufficient for transient T-DNA transformation end expression. The segment covering 15–24 (EIEHMPEAPR) has biased composition (basic and acidic residues). Positions 71 to 80 (QSQQQPQASP) are enriched in low complexity. Ser-79 is modified (phosphoserine). Residues 163-341 (IESILASVSG…PSYMDFTKRG (179 aa)) form an involved in homomultimerization and histone H2A binding region. Residues 194–257 (DPKRAKRILA…SELNTENKHL (64 aa)) form the bZIP domain. Residues 196-217 (KRAKRILANRQSAARSKERKIR) are basic motif. Residues 198 to 205 (AKRILANR) carry the Nuclear localization signal motif. Residues 222–257 (LERKVQTLQNEATTLSAQVTMLQRGTSELNTENKHL) are leucine-zipper. Positions 307 to 331 (SQQSAMNQFGNKTNQQMSTNGQPSL) are enriched in polar residues. Positions 307-341 (SQQSAMNQFGNKTNQQMSTNGQPSLPSYMDFTKRG) are disordered.

The protein belongs to the bZIP family. Forms homomultimers. Interacts with Agrobacterium tumefaciens VirE2 and mediates its translocation to the host nucleus. Binds to VIP2. Forms a complex made of Agrobacterium VirE2, VIP1, VIP2 and single-stranded DNA (ssDNA). The interaction with KAP1 mediates its nuclear import. Binds to the H2A histone RAT5. Interacts with MPK3 and Agrobacterium virF. Forms a complex made of VIP1, VBF and Agrobacterium virE2. Interacts with SCF(VBF) E3 ubiquitin ligase complex. Binds directly to VBF. Forms heterodimers with BZIP34 and BZIP61. Phosphorylated by MPK3. This phosphorylation promotes nuclear localization. In terms of tissue distribution, mostly expressed in dividing cells, present in leaves, roots and seedlings.

It localises to the cytoplasm. The protein resides in the nucleus. Functionally, transcription activator that binds specifically to the VIP1 response elements (VREs) DNA sequence 5'-ACNGCT-3' found in some stress genes (e.g. TRX8 and MYB44), when phosphorylated/activated by MPK3. Required for Agrobacterium VirE2 nuclear import and tumorigenicity. Promotes transient expression of T-DNA in early stages by interacting with VirE2 in complex with the T-DNA and facilitating its translocation to the nucleus, and mediates stable genetic transformation by Agrobacterium by binding H2A histone. Prevents cell differentiation and shoot formation. Limits sulfate utilization efficiency (SUE) and sulfate uptake, especially in low-sulfur conditions. Plays a role in osmosensory response by binding to the 5'-AGCTGT/G-3' DNA sequence found in the promoters of the hypoosmolarity-responsive genes CYP707A1 and CYP707A3. Involved in the negative regulation of touch-induced root bending and salt-dependent root bending. In Arabidopsis thaliana (Mouse-ear cress), this protein is Transcription factor VIP1.